Here is a 457-residue protein sequence, read N- to C-terminus: MSGTRASNDRPPGAGGVKRGRLQQEAAATGSRVTVVLGAQWGDEGKGKVVDLLATDADIISRCQGGNNAGHTVVVDGKEYDFHLLPSGIINTKAVSFIGNGVVIHLPGLFEEAEKNEKKGLKDWEKRLIISDRAHLVFDFHQAVDGLQEVQRQAQEGKNIGTTKKGIGPTYSSKAARTGLRICDLLSDFDEFSSRFKNLAHQHQSMFPTLEIDIEGQLKRLKGFAERIRPMVRDGVYFMYEALHGPPKKILVEGANAALLDIDFGTYPFVTSSNCTVGGVCTGLGIPPQNIGDVYGVVKAYTTRVGIGAFPTEQINEIGGLLQTRGHEWGVTTGRKRRCGWLDLMILRYAHMVNGFTALALTKLDILDVLGEVKVGVSYKLNGKRIPYFPANQEMLQKVEVEYETLPGWKADTTGARRWEDLPPQAQNYIRFVENHVGVAVKWVGVGKSRESMIQLF.

Residues 1 to 21 form a disordered region; sequence MSGTRASNDRPPGAGGVKRGR. GTP contacts are provided by residues 42-48 and 70-72; these read GDEGKGK and GHT. The active-site Proton acceptor is the aspartate 43. Mg(2+) contacts are provided by aspartate 43 and glycine 70. Aspartate 43 lines the substrate pocket. Residues 43–46, 68–71, threonine 163, arginine 177, asparagine 256, threonine 271, and arginine 335 contribute to the IMP site; these read DEGK and NAGH. Histidine 71 serves as the catalytic Proton donor. Residue 331–337 participates in substrate binding; the sequence is VTTGRKR. Residues arginine 337, 363-365, and 445-448 each bind GTP; these read KLD and GVGK.

It belongs to the adenylosuccinate synthetase family. As to quaternary structure, homodimer. Mg(2+) serves as cofactor. As to expression, predominantly expressed in skeletal muscle and heart, as well as in several hematopoietic cell lines and solid tumors.

The protein localises to the cytoplasm. It carries out the reaction IMP + L-aspartate + GTP = N(6)-(1,2-dicarboxyethyl)-AMP + GDP + phosphate + 2 H(+). Its pathway is purine metabolism; AMP biosynthesis via de novo pathway; AMP from IMP: step 1/2. In terms of biological role, component of the purine nucleotide cycle (PNC), which interconverts IMP and AMP to regulate the nucleotide levels in various tissues, and which contributes to glycolysis and ammoniagenesis. Catalyzes the first committed step in the biosynthesis of AMP from IMP. The protein is Adenylosuccinate synthetase isozyme 1 of Homo sapiens (Human).